Reading from the N-terminus, the 684-residue chain is Transcriptional regulatory protein RCO1 (684 aa).

At M1 the chain carries N-acetylmethionine. Positions 1-48 are disordered; sequence MDTSKKDTTRSPSHSNSSSPSSSSLSSSSSKEKKRPKRLSSQNVNYDL. Positions 10–29 are enriched in low complexity; that stretch reads RSPSHSNSSSPSSSSLSSSS. S68 is modified (phosphoserine). A PHD-type 1 zinc finger spans residues 260–309; it reads EDFCSACNQSGSFLCCDTCPKSFHFLCLDPPIDPNNLPKGDWHCNECKFK. The PHD-type 2; atypical zinc-finger motif lies at 414–472; the sequence is FLICYKCNQTRLGSWSHPENSRLIMTCDYCQTPWHLDCVPRASFKNLGSKWKCPLHSPT. Phosphoserine is present on S683.

Component of the RPD3C(S) complex composed of at least EAF3, RCO1, RPD3, SIN3, and UME1.

The protein resides in the nucleus. In terms of biological role, catalytic component of the RPD3C(S) histone deacetylase complex responsible for the deacetylation of lysine residues on the N-terminal part of the core histones (H2A, H2B, H3 and H4). Histone deacetylation gives a tag for epigenetic repression and plays an important role in transcriptional regulation, cell cycle progression, DNA damage response, osmotic stress response and developmental events. In Saccharomyces cerevisiae (strain ATCC 204508 / S288c) (Baker's yeast), this protein is Transcriptional regulatory protein RCO1 (RCO1).